We begin with the raw amino-acid sequence, 371 residues long: MVSKKLPLDLEEEILFRVPPRSLVRFRSVCREWNTLFKNKRFINKNFACGRPEIMLNTHSHIYSISVDLKDENPTIKVRDLRFDHLSCRGYHLYGICDGNFFMYSFLNGGGGVVWNPLFWRQTKWIAKAENTCGKAIGYDGSRPEKSYKIIGRSSCSWQGKVTDTYSVFEFATNAWKVTDHTRFHEKPELMDDSGRVSLNGNLYWTAYNSPHTGQYFIAMLDFSKEIEKSRKTFCVLPCKGEKSTTHTRILSIYKGDRFSVLEQSKKTREIEIWVTKDQIGNGDDGDDVVWIKFMTVSRPDFPILLSYISTSYFVDNDIHGKSFVLCCPSKRPKAAWVYIVRGDLCKKIKIDQVLCEFQSSVYVPSLITIP.

The F-box domain occupies 1–46 (MVSKKLPLDLEEEILFRVPPRSLVRFRSVCREWNTLFKNKRFINKN).

This Arabidopsis thaliana (Mouse-ear cress) protein is Putative F-box protein At1g58090.